Reading from the N-terminus, the 260-residue chain is Ribosomal RNA small subunit methyltransferase J (260 aa).

S-adenosyl-L-methionine contacts are provided by residues 125 to 126 and Asp179; that span reads ER. Residues 234–260 form a disordered region; it reads IDGPKPSHALDGKSSRYDIYPKKALKP. Residues 241 to 254 show a composition bias toward basic and acidic residues; the sequence is HALDGKSSRYDIYP.

It belongs to the methyltransferase superfamily. RsmJ family.

It localises to the cytoplasm. The catalysed reaction is guanosine(1516) in 16S rRNA + S-adenosyl-L-methionine = N(2)-methylguanosine(1516) in 16S rRNA + S-adenosyl-L-homocysteine + H(+). Functionally, specifically methylates the guanosine in position 1516 of 16S rRNA. The polypeptide is Ribosomal RNA small subunit methyltransferase J (Pseudomonas fluorescens (strain SBW25)).